Consider the following 168-residue polypeptide: Cyclic pyranopterin monophosphate synthase (168 aa).

Substrate-binding positions include 75–77 (MCH) and 115–116 (ME). The active site involves Asp-130.

The protein belongs to the MoaC family. Homohexamer; trimer of dimers.

It carries out the reaction (8S)-3',8-cyclo-7,8-dihydroguanosine 5'-triphosphate = cyclic pyranopterin phosphate + diphosphate. Its pathway is cofactor biosynthesis; molybdopterin biosynthesis. In terms of biological role, catalyzes the conversion of (8S)-3',8-cyclo-7,8-dihydroguanosine 5'-triphosphate to cyclic pyranopterin monophosphate (cPMP). The sequence is that of Cyclic pyranopterin monophosphate synthase from Bacillus licheniformis (strain ATCC 14580 / DSM 13 / JCM 2505 / CCUG 7422 / NBRC 12200 / NCIMB 9375 / NCTC 10341 / NRRL NRS-1264 / Gibson 46).